Here is a 202-residue protein sequence, read N- to C-terminus: Neurensin-2 (202 aa).

2 helical membrane-spanning segments follow: residues 65–85 (VAVA…GYAV) and 116–136 (VVGA…LFLI). The tract at residues 162-202 (RDEPEKLSPAFHETSSQSPFLTPPSPFGQQSVQTSQPQRDL) is disordered. The span at 188 to 202 (FGQQSVQTSQPQRDL) shows a compositional bias: polar residues.

The protein belongs to the VMP family. Expressed specifically in brain where it is widely expressed, with highest levels of expression in thalamus and hypothalamus. In brain, found in neural cell bodies and detected in many regions of the limbic system, such as the septum nucleus, horizontal and vertical limbs of the diagonal band, hippocampus, amygdaloid nucleus, and habernula nucleus. Also localizes to small vesicles found in the perinuclear region of Neuro2a and PC12 cells.

It is found in the membrane. May play a role in maintenance and/or transport of vesicles. The protein is Neurensin-2 of Mus musculus (Mouse).